The primary structure comprises 317 residues: Acetyl-coenzyme A carboxylase carboxyl transferase subunit alpha (317 aa).

The region spanning Arg39–Glu293 is the CoA carboxyltransferase C-terminal domain.

Belongs to the AccA family. As to quaternary structure, acetyl-CoA carboxylase is a heterohexamer composed of biotin carboxyl carrier protein (AccB), biotin carboxylase (AccC) and two subunits each of ACCase subunit alpha (AccA) and ACCase subunit beta (AccD).

It is found in the cytoplasm. The catalysed reaction is N(6)-carboxybiotinyl-L-lysyl-[protein] + acetyl-CoA = N(6)-biotinyl-L-lysyl-[protein] + malonyl-CoA. It functions in the pathway lipid metabolism; malonyl-CoA biosynthesis; malonyl-CoA from acetyl-CoA: step 1/1. Functionally, component of the acetyl coenzyme A carboxylase (ACC) complex. First, biotin carboxylase catalyzes the carboxylation of biotin on its carrier protein (BCCP) and then the CO(2) group is transferred by the carboxyltransferase to acetyl-CoA to form malonyl-CoA. In Neisseria gonorrhoeae (strain NCCP11945), this protein is Acetyl-coenzyme A carboxylase carboxyl transferase subunit alpha.